The chain runs to 78 residues: Omega-conotoxin-like 2 (78 aa).

The first 22 residues, 1–22 (MKLTCVVIVAVLLLTACQLITA), serve as a signal peptide directing secretion. Residues 23–42 (DDSRGTQKHRSLRSTTKVSK) constitute a propeptide that is removed on maturation. Intrachain disulfides connect Cys46–Cys62, Cys53–Cys65, and Cys61–Cys72.

It belongs to the conotoxin O1 superfamily. Expressed by the venom duct.

Its subcellular location is the secreted. Omega-conotoxins act at presynaptic membranes, they bind and block voltage-gated calcium channels (Cav). The polypeptide is Omega-conotoxin-like 2 (Conus striatus (Striated cone)).